Here is a 359-residue protein sequence, read N- to C-terminus: 3-dehydroquinate synthase (359 aa).

Residues 71–76, 105–109, 129–130, K142, and K151 each bind NAD(+); these read DGEAYK, GVIGD, and TT. Positions 184, 247, and 264 each coordinate Zn(2+).

Belongs to the sugar phosphate cyclases superfamily. Dehydroquinate synthase family. It depends on Co(2+) as a cofactor. Zn(2+) is required as a cofactor. Requires NAD(+) as cofactor.

Its subcellular location is the cytoplasm. It catalyses the reaction 7-phospho-2-dehydro-3-deoxy-D-arabino-heptonate = 3-dehydroquinate + phosphate. Its pathway is metabolic intermediate biosynthesis; chorismate biosynthesis; chorismate from D-erythrose 4-phosphate and phosphoenolpyruvate: step 2/7. In terms of biological role, catalyzes the conversion of 3-deoxy-D-arabino-heptulosonate 7-phosphate (DAHP) to dehydroquinate (DHQ). This Burkholderia ambifaria (strain ATCC BAA-244 / DSM 16087 / CCUG 44356 / LMG 19182 / AMMD) (Burkholderia cepacia (strain AMMD)) protein is 3-dehydroquinate synthase.